The primary structure comprises 629 residues: Endoglucanase 15 (629 aa).

The first 30 residues, 1–30, serve as a signal peptide directing secretion; that stretch reads MAKNGGAHGAATLFGLLALASMVKLGFVAG. The Nucleophile role is filled by D87. Active-site residues include H421, D473, and E482. Residues N520, N540, and N561 are each glycosylated (N-linked (GlcNAc...) asparagine).

This sequence belongs to the glycosyl hydrolase 9 (cellulase E) family.

It localises to the secreted. It carries out the reaction Endohydrolysis of (1-&gt;4)-beta-D-glucosidic linkages in cellulose, lichenin and cereal beta-D-glucans.. The protein is Endoglucanase 15 of Oryza sativa subsp. japonica (Rice).